The primary structure comprises 255 residues: MAADIRIVPCLTDNFGYLIHDPSSGATASIDAPEAAPLIAALEKEGWKLTDILVTHHHGDHVGGVAELKKKYQCRVVAPHDANAKIADIDLRVEEGDVVRVGGLSARVLETPGHTLDHISYVFDDDRALFAADTLFSIGCGRVFEGTYPMMWESLLKLRELPDDFKLYCGHEYTASNVKFALTIEPDNAALQARAKQVEQQRAAGQPTIPVTLGEEKQANLFLRADVPSVAAAVGLPGESAADVFGELRERKNNS.

Zn(2+) is bound by residues His-56, His-58, Asp-60, His-61, His-114, Asp-133, and His-171.

Belongs to the metallo-beta-lactamase superfamily. Glyoxalase II family. In terms of assembly, monomer. Zn(2+) is required as a cofactor.

It catalyses the reaction an S-(2-hydroxyacyl)glutathione + H2O = a 2-hydroxy carboxylate + glutathione + H(+). The protein operates within secondary metabolite metabolism; methylglyoxal degradation; (R)-lactate from methylglyoxal: step 2/2. Functionally, thiolesterase that catalyzes the hydrolysis of S-D-lactoyl-glutathione to form glutathione and D-lactic acid. The polypeptide is Hydroxyacylglutathione hydrolase (Rhodopseudomonas palustris (strain BisB5)).